Reading from the N-terminus, the 664-residue chain is Semaphorin-7A (664 aa).

Positions 1–44 are cleaved as a signal peptide; sequence MTPPPPGRAAPSAPRARVLSLPARFGLPLRLRLLLVFWVAAASA. The 436-residue stretch at 53-488 folds into the Sema domain; sequence RISAVWKGQD…SQWEVSQVPL (436 aa). N-linked (GlcNAc...) asparagine glycosylation is present at Asn102. Cys117 and Cys123 are disulfide-bonded. Asymmetric dimethylarginine is present on Arg132. A disulfide bond links Cys140 and Cys149. Residues Asn154 and Asn256 are each glycosylated (N-linked (GlcNAc...) asparagine). 7 disulfide bridges follow: Cys264–Cys364, Cys289–Cys333, Cys491–Cys509, Cys498–Cys539, Cys501–Cys516, Cys564–Cys611, and Cys585–Cys594. An interaction with integrins region spans residues 265–267; the sequence is RGD. Positions 265-267 match the Cell attachment site motif; it reads RGD. The N-linked (GlcNAc...) asparagine glycan is linked to Asn328. One can recognise an Ig-like C2-type domain in the interval 542-627; that stretch reads PKPDEAPLQK…YLREAQHWEL (86 aa). Asn600 carries an N-linked (GlcNAc...) asparagine glycan. Ala646 is lipidated: GPI-anchor amidated alanine. Residues 647-664 constitute a propeptide, removed in mature form; the sequence is ASFWLGVLPTLILGLLVH.

It belongs to the semaphorin family. Interacts with PLXNC1. Interacts with ITGA1 and ITGB1. In terms of tissue distribution, highly expressed in activated T-cells (at protein level). Highest expression in brain. Lower in heart, thymus, spleen, testis and ovary. The expression increases in late embryonic and postnatal stages. Detected in T-cells.

It localises to the cell membrane. Functionally, plays an important role in integrin-mediated signaling and functions both in regulating cell migration and immune responses. Promotes formation of focal adhesion complexes, activation of the protein kinase PTK2/FAK1 and subsequent phosphorylation of MAPK1 and MAPK3. Promotes production of pro-inflammatory cytokines by monocytes and macrophages. Plays an important role in modulating inflammation and T-cell-mediated immune responses. Promotes axon growth in the embryonic olfactory bulb. Promotes attachment, spreading and dendrite outgrowth in melanocytes. This is Semaphorin-7A (Sema7a) from Mus musculus (Mouse).